Reading from the N-terminus, the 371-residue chain is Glycosyltransferase 8 domain-containing protein 1 (371 aa).

Residues Met1–Asn7 lie on the Cytoplasmic side of the membrane. A helical; Signal-anchor for type II membrane protein transmembrane segment spans residues Ile8–Ser28. Residues Leu29–Lys371 lie on the Lumenal side of the membrane. Asn249 and Asn257 each carry an N-linked (GlcNAc...) asparagine glycan.

This sequence belongs to the glycosyltransferase 8 family.

It is found in the membrane. The polypeptide is Glycosyltransferase 8 domain-containing protein 1 (GLT8D1) (Homo sapiens (Human)).